The sequence spans 197 residues: Neurturin (197 aa).

The first 19 residues, methionine 1–serine 19, serve as a signal peptide directing secretion. The propeptide occupies isoleucine 20–arginine 95. The segment at threonine 74–arginine 93 is disordered. The segment covering glycine 82–arginine 93 has biased composition (basic residues). 3 disulfides stabilise this stretch: cysteine 103–cysteine 165, cysteine 130–cysteine 194, and cysteine 134–cysteine 196. Positions 149, 158, 160, and 162 each coordinate heparan sulfate group.

The protein belongs to the TGF-beta family. GDNF subfamily. In terms of assembly, homodimer; disulfide-linked. Interacts with GFRA2 coreceptor and RET: forms a 2:2:2 ternary complex composed of NRTN ligand, GFRA2 and RET receptor. Also forms a 4:4:4 tetrameric complex composed of 4 copies of NRTN ligand, GFRA2 and RET receptor, which prevents endocytosis of RET.

It localises to the secreted. Functionally, growth factor that supports the survival of sympathetic neurons in culture. May regulate the development and maintenance of the CNS. Involved in the development of the neural crest. Might control the size of non-neuronal cell population such as haemopoietic cells. Acts by binding to its coreceptor, GFRA2, leading to autophosphorylation and activation of the RET receptor. Heparan sulfate-binding is required for signaling. This Homo sapiens (Human) protein is Neurturin.